The chain runs to 558 residues: MLTQPSIKYRPAQIIDFPARTWPSKQLKTPPRWCSTDLRDGNQALANPMDHVKKMAFFKHLIECGFKEIEVAFPAASQTDFDFVRLLIEGKHIPDDVTIQVMTQSRVDLIERTIQSLVGAKKAIVHIYNATAPVFREIVFCQDKPATLELAVQGVKHIRQLCEQYPDTQWTLQYSPETFCFTEPDFALEVCEAAAKTWQPSLERPMILNLPTTVEVNTPNVFADQIEHFITSFSSLENITISVHPHNDRGTGVATAEMAILAGAQRVEGCLFGNGERTGNVDLVTLAMNLYSQGVYPNLDFSDMRRTVELVEECNELPVHPRHPYAGALAFTAFSGSHQDAIKKGFASQKSTSSMIWQIPYLPLDPKDIGCTYEEVIRVNSQSGKSGAAWLLQENHGLFLPRKLQIDFSKKVKNHTDQTGHEMPLADVWRLFRESYRLNPDDKGQMKLMDYRSHSSNGLQEIRATLRYQEKTWQLVGEGKGLLSAMLDALRKRFNWQINISDFHEHTLGQQTKSKAVSYVQIESDQATPSFGVAIDEDSTKASLQALINACHPLYKEA.

One can recognise a Pyruvate carboxyltransferase domain in the interval 31 to 305 (PRWCSTDLRD…YPNLDFSDMR (275 aa)). 4 residues coordinate Mg(2+): D40, H244, H246, and N280. Residues 439–558 (NPDDKGQMKL…NACHPLYKEA (120 aa)) form a regulatory domain region.

It belongs to the alpha-IPM synthase/homocitrate synthase family. LeuA type 2 subfamily. In terms of assembly, homodimer. Mg(2+) is required as a cofactor.

It localises to the cytoplasm. It carries out the reaction 3-methyl-2-oxobutanoate + acetyl-CoA + H2O = (2S)-2-isopropylmalate + CoA + H(+). Its pathway is amino-acid biosynthesis; L-leucine biosynthesis; L-leucine from 3-methyl-2-oxobutanoate: step 1/4. Functionally, catalyzes the condensation of the acetyl group of acetyl-CoA with 3-methyl-2-oxobutanoate (2-ketoisovalerate) to form 3-carboxy-3-hydroxy-4-methylpentanoate (2-isopropylmalate). The polypeptide is 2-isopropylmalate synthase (Marinomonas sp. (strain MWYL1)).